The primary structure comprises 335 residues: Phospho-N-acetylmuramoyl-pentapeptide-transferase (335 aa).

The next 10 helical transmembrane spans lie at 3-23 (LTIL…PHFI), 53-73 (GGTV…LVYF), 78-98 (SLGL…IGFL), 118-138 (FTLQ…PSGI), 143-163 (VFGY…FWVV), 174-194 (GIDG…GVIA), 200-220 (FDVL…FLFN), 226-246 (IFMG…ISIA), 251-271 (WTLL…MLQV), and 314-334 (VDAF…AILY).

Belongs to the glycosyltransferase 4 family. MraY subfamily. Requires Mg(2+) as cofactor.

Its subcellular location is the cell membrane. It catalyses the reaction UDP-N-acetyl-alpha-D-muramoyl-L-alanyl-gamma-D-glutamyl-L-lysyl-D-alanyl-D-alanine + di-trans,octa-cis-undecaprenyl phosphate = Mur2Ac(oyl-L-Ala-gamma-D-Glu-L-Lys-D-Ala-D-Ala)-di-trans,octa-cis-undecaprenyl diphosphate + UMP. It functions in the pathway cell wall biogenesis; peptidoglycan biosynthesis. Its function is as follows. Catalyzes the initial step of the lipid cycle reactions in the biosynthesis of the cell wall peptidoglycan: transfers peptidoglycan precursor phospho-MurNAc-pentapeptide from UDP-MurNAc-pentapeptide onto the lipid carrier undecaprenyl phosphate, yielding undecaprenyl-pyrophosphoryl-MurNAc-pentapeptide, known as lipid I. The polypeptide is Phospho-N-acetylmuramoyl-pentapeptide-transferase (Streptococcus equi subsp. zooepidemicus (strain MGCS10565)).